The chain runs to 254 residues: DNA repair protein RecO (254 aa).

This sequence belongs to the RecO family.

Involved in DNA repair and RecF pathway recombination. The sequence is that of DNA repair protein RecO from Agrobacterium fabrum (strain C58 / ATCC 33970) (Agrobacterium tumefaciens (strain C58)).